Here is a 354-residue protein sequence, read N- to C-terminus: Clavesin-1 (354 aa).

A CRAL-TRIO domain is found at 118–279 (IKRALIDGFP…EFGGTLPPYD (162 aa)). A disordered region spans residues 317-354 (RECSPKPMKRSQSVVEAGTLKHEEKGENENTQPLLALD). Residues 335–344 (TLKHEEKGEN) show a composition bias toward basic and acidic residues. The segment covering 345 to 354 (ENTQPLLALD) has biased composition (polar residues).

Forms a complex with clathrin heavy chain and gamma-adaptin.

The protein resides in the golgi apparatus. It is found in the trans-Golgi network membrane. The protein localises to the early endosome membrane. Its subcellular location is the cytoplasmic vesicle. It localises to the clathrin-coated vesicle. Its function is as follows. Required for normal morphology of late endosomes and/or lysosomes in neurons. Binds phosphatidylinositol 3,5-bisphosphate (PtdIns(3,5)P2). This Mus musculus (Mouse) protein is Clavesin-1 (Clvs1).